We begin with the raw amino-acid sequence, 183 residues long: Gene BABR protein 2 (183 aa).

The protein is Gene BABR protein 2 of Babesia bovis.